The following is a 301-amino-acid chain: F1 operon positive regulatory protein (301 aa).

One can recognise an HTH araC/xylS-type domain in the interval 8–107 (NSIIQYIEEN…GYTPRQYRMI (100 aa)). DNA-binding regions (H-T-H motif) lie at residues 26–47 (DCLV…KEYV) and 74–97 (IIEI…KKIF).

Its function is as follows. Positive regulator of F1 operon expression. The sequence is that of F1 operon positive regulatory protein (caf1R) from Yersinia pestis.